The following is a 2273-amino-acid chain: Linear gramicidin synthase subunit A (2273 aa).

The tract at residues 1 to 144 (MRILFLTTFM…AIEELFIREW (144 aa)) is GART. Carrier domains are found at residues 693–767 (APTD…TEQK) and 1724–1798 (APRT…TSEQ). O-(pantetheine 4'-phosphoryl)serine occurs at positions 728 and 1759.

It belongs to the ATP-dependent AMP-binding enzyme family. Large multienzyme complex composed of 4 subunits; LgrA, LgrB, LgrC and LgrD. Pantetheine 4'-phosphate serves as cofactor.

Activates valine (or leucine, but much less frequently), and then glycine and catalyzes the formation of the peptide bond in the first step of peptide synthesis. This enzyme may also play a role in N-formylation of the first amino acid residue in the synthesized dipeptide. The chain is Linear gramicidin synthase subunit A (lgrA) from Brevibacillus parabrevis.